We begin with the raw amino-acid sequence, 299 residues long: 4-hydroxy-tetrahydrodipicolinate synthase (299 aa).

A pyruvate-binding site is contributed by T50. Y139 serves as the catalytic Proton donor/acceptor. The active-site Schiff-base intermediate with substrate is the K167. V209 is a binding site for pyruvate.

It belongs to the DapA family. Homotetramer; dimer of dimers.

The protein resides in the cytoplasm. It catalyses the reaction L-aspartate 4-semialdehyde + pyruvate = (2S,4S)-4-hydroxy-2,3,4,5-tetrahydrodipicolinate + H2O + H(+). It functions in the pathway amino-acid biosynthesis; L-lysine biosynthesis via DAP pathway; (S)-tetrahydrodipicolinate from L-aspartate: step 3/4. Its function is as follows. Catalyzes the condensation of (S)-aspartate-beta-semialdehyde [(S)-ASA] and pyruvate to 4-hydroxy-tetrahydrodipicolinate (HTPA). The polypeptide is 4-hydroxy-tetrahydrodipicolinate synthase (Synechococcus elongatus (strain ATCC 33912 / PCC 7942 / FACHB-805) (Anacystis nidulans R2)).